Reading from the N-terminus, the 361-residue chain is Serine/threonine-protein kinase SAPK9 (361 aa).

A Protein kinase domain is found at Y22–F278. ATP contacts are provided by residues I28–A36 and K51. The active-site Proton acceptor is the D141.

It belongs to the protein kinase superfamily. Ser/Thr protein kinase family. Interacts with BZIP46. May be phosphorylated. Expressed in leaf sheaths and roots. Expressed in shoots of young seedlings.

The protein resides in the cytoplasm. The protein localises to the nucleus. It catalyses the reaction L-seryl-[protein] + ATP = O-phospho-L-seryl-[protein] + ADP + H(+). The enzyme catalyses L-threonyl-[protein] + ATP = O-phospho-L-threonyl-[protein] + ADP + H(+). Activated by hyperosmotic stress and abscisic acid (ABA). May play a role in signal transduction of hyperosmotic response. Can phosphorylate BZIP46 in vitro. In Oryza sativa subsp. japonica (Rice), this protein is Serine/threonine-protein kinase SAPK9 (SAPK9).